A 245-amino-acid chain; its full sequence is Adapter protein MecA (245 aa).

This sequence belongs to the MecA family. In terms of assembly, homodimer.

In terms of biological role, enables the recognition and targeting of unfolded and aggregated proteins to the ClpC protease or to other proteins involved in proteolysis. The protein is Adapter protein MecA of Streptococcus pneumoniae (strain Hungary19A-6).